Consider the following 482-residue polypeptide: NADH-quinone oxidoreductase subunit N (482 aa).

13 helical membrane passes run 10–30, 44–64, 77–97, 113–133, 166–186, 206–226, 243–265, 277–296, 302–322, 328–348, 374–394, 397–417, and 451–471; these read ALGPALPELILTVGALVLILY, VGAIIVLIVALFSVVSQPLGA, GFARVMKTLTLVGSLAALLLA, ILIVLSSIGMLIMASANDLIG, FVLGALSSGMLLYGASLVYGF, LGLVLGIVFVAAGVAFKLAAV, VTAFFASAPKMAAMAMTVRVFIG, IIVFIAIASMALGSFAAIGQ, LMAYSSIGNVGYALIGLAAGT, GVVVYMAIYLAMTLGAFAVIL, AFCLAMMMFSLAGIPPLAGFF, FYVFAAAIKAGLNVLAVIGVV, and IVLAASSVVVVLFWIVPAPLV.

It belongs to the complex I subunit 2 family. NDH-1 is composed of 14 different subunits. Subunits NuoA, H, J, K, L, M, N constitute the membrane sector of the complex.

Its subcellular location is the cell inner membrane. The enzyme catalyses a quinone + NADH + 5 H(+)(in) = a quinol + NAD(+) + 4 H(+)(out). In terms of biological role, NDH-1 shuttles electrons from NADH, via FMN and iron-sulfur (Fe-S) centers, to quinones in the respiratory chain. The immediate electron acceptor for the enzyme in this species is believed to be ubiquinone. Couples the redox reaction to proton translocation (for every two electrons transferred, four hydrogen ions are translocated across the cytoplasmic membrane), and thus conserves the redox energy in a proton gradient. This chain is NADH-quinone oxidoreductase subunit N, found in Methylobacterium nodulans (strain LMG 21967 / CNCM I-2342 / ORS 2060).